We begin with the raw amino-acid sequence, 347 residues long: Dehydratase asqC (347 aa).

Residues M1–A18 form the signal peptide. Residues N51, N103, N131, N143, N215, N264, and N281 are each glycosylated (N-linked (GlcNAc...) asparagine).

It catalyses the reaction [(1'E)-5'-(3',3'-dimethyloxiran-2'-yl)-3'-hydroxy-3'-methylpent-1'-en-1'-yl]-quinolinone B = (1'E,3'E)-5-(3,3-dimethyloxiran-2-yl)-3-methylhexa-1,3-dienyl-quinolinone B + H2O. Its pathway is secondary metabolite biosynthesis. It functions in the pathway alkaloid biosynthesis. The protein operates within mycotoxin biosynthesis. In terms of biological role, dehydratase; part of the gene cluster that mediates the biosynthesis of the aspoquinolone mycotoxins. Within the pathway, the dehydratase asqC catalyzes the dehydratation of the epoxide at C-3 to produce (1'E,3'E)-5-(3,3-dimethyloxiran-2-yl)-3-methylhexa-1,3-dienyl-quinolinone B. The first step of the pathway is catalyzed by the nonribosomal peptide synthetase asqK that condenses anthranilic acid and O-methyl-L-tyrosine to produce 4'-methoxycyclopeptin. 4'-methoxycyclopeptin is then converted to 4'-methoxydehydrocyclopeptin by the ketoglutarate-dependent dioxygenase asqJ. AsqJ also converts its first product 4'-methoxydehydrocyclopeptin to 4'-methoxycyclopenin. The following conversion of 4'-methoxycyclopenin into 4'-methoxyviridicatin is catalyzed by the cyclopenase asqI. 4'-methoxyviridicatin is the precursor of quinolone natural products, and is further converted to quinolinone B. The prenyltransferase asqH1 then catalyzes the canonical Friedel-Crafts alkylation of quinolinone B with dimethylallyl cation to yield dimethylallyl quinolone, which is subjected to FAD-dependent dehydrogenation by the FAD-linked oxidoreductase asqF to yield conjugated aryl diene. The delta(3') double bond then serves as the site of the second alkylation with DMAPP catalyzed by the prenyltransferase asqH2 to yield a carbenium ion intermediate, which can be attacked by H(2)O to yield a styrenyl quinolone containing a C3'-hydroxyprenyl chain. The FAD-dependent monooxygenase asqG performs epoxidation of the terminal C7'-C8' olefin. Finally, after dehydratation of the epoxide at C3 by asqC, the quinolone epoxide rearrangement protein asqO catalyzes an enzymatic 3-exo-tet cyclization to yield the cyclopropyl-THF ring system in aspoquinolone. This is Dehydratase asqC from Emericella nidulans (strain FGSC A4 / ATCC 38163 / CBS 112.46 / NRRL 194 / M139) (Aspergillus nidulans).